The chain runs to 155 residues: 6,7-dimethyl-8-ribityllumazine synthase (155 aa).

Residues phenylalanine 18, 49–51 (ALE), and 75–77 (CVI) each bind 5-amino-6-(D-ribitylamino)uracil. 80–81 (ET) contacts (2S)-2-hydroxy-3-oxobutyl phosphate. The active-site Proton donor is the histidine 83. 5-amino-6-(D-ribitylamino)uracil is bound at residue asparagine 108. A (2S)-2-hydroxy-3-oxobutyl phosphate-binding site is contributed by arginine 122.

This sequence belongs to the DMRL synthase family.

The enzyme catalyses (2S)-2-hydroxy-3-oxobutyl phosphate + 5-amino-6-(D-ribitylamino)uracil = 6,7-dimethyl-8-(1-D-ribityl)lumazine + phosphate + 2 H2O + H(+). Its pathway is cofactor biosynthesis; riboflavin biosynthesis; riboflavin from 2-hydroxy-3-oxobutyl phosphate and 5-amino-6-(D-ribitylamino)uracil: step 1/2. Functionally, catalyzes the formation of 6,7-dimethyl-8-ribityllumazine by condensation of 5-amino-6-(D-ribitylamino)uracil with 3,4-dihydroxy-2-butanone 4-phosphate. This is the penultimate step in the biosynthesis of riboflavin. The chain is 6,7-dimethyl-8-ribityllumazine synthase from Bartonella henselae (strain ATCC 49882 / DSM 28221 / CCUG 30454 / Houston 1) (Rochalimaea henselae).